The sequence spans 296 residues: Endonuclease 5 (296 aa).

The signal sequence occupies residues 1–20; it reads MRLWIVSVLVLTHLVHGALC. A divalent metal cation-binding residues include tryptophan 21 and histidine 26. 21-26 is a binding site for substrate; the sequence is WGKDGH. Cysteine 30 and cysteine 62 are oxidised to a cystine. Aspartate 66 and histidine 81 together coordinate a divalent metal cation. Substrate-binding positions include 66 to 72, 81 to 84, and 91 to 96; these read DEIKKLS, HYVN, and NYEYCR. 3 disulfide bridges follow: cysteine 90–cysteine 243, cysteine 98–cysteine 108, and cysteine 223–cysteine 230. Positions 115 and 133 each coordinate substrate. Asparagine 115 is a glycosylation site (N-linked (GlcNAc...) asparagine). An N-linked (GlcNAc...) asparagine glycan is attached at asparagine 134. A divalent metal cation-binding residues include histidine 144, aspartate 148, and histidine 154. The segment at 144–193 is substrate binding; the sequence is HYMGDVHQPLHTGFLGDLGGNTIIVNWYHNKSNLHHVWDNMIIDSALETY. N-linked (GlcNAc...) asparagine glycosylation occurs at asparagine 173. A divalent metal cation is bound by residues histidine 178 and aspartate 182. N-linked (GlcNAc...) asparagine glycosylation occurs at asparagine 195. Residues 281–296 constitute a propeptide, removed in mature form; that stretch reads ATLNRIFSAKPKLAGL.

Belongs to the nuclease type I family. In terms of assembly, monomer. It depends on Zn(2+) as a cofactor.

It carries out the reaction Endonucleolytic cleavage to 5'-phosphomononucleotide and 5'-phosphooligonucleotide end-products.. Functionally, hydrolyzes, with low efficiency, only single-stranded DNA and RNA without apparent specificity for bases. Endonuclease that recognizes and cleaves some mismatches with high efficiency, including heteroduplex double-stranded DNA; mostly efficient on T/G, A/G and G/G mismatches, less efficient for T/T and poorly efficient for C/C, A/A, T/C and A/C. This Arabidopsis thaliana (Mouse-ear cress) protein is Endonuclease 5.